The sequence spans 153 residues: Histone H2B.4 (153 aa).

Basic and acidic residues-rich tracts occupy residues 1–28 (MAPK…EKAP) and 36–53 (EKRL…EGKK). Residues 1 to 61 (MAPKAEKKPA…KKAGRKKAKK (61 aa)) are disordered. K7 and K37 each carry N6-acetyllysine. Residue K149 forms a Glycyl lysine isopeptide (Lys-Gly) (interchain with G-Cter in ubiquitin) linkage.

Belongs to the histone H2B family. As to quaternary structure, the nucleosome is a histone octamer containing two molecules each of H2A, H2B, H3 and H4 assembled in one H3-H4 heterotetramer and two H2A-H2B heterodimers. The octamer wraps approximately 147 bp of DNA. Can be acetylated to form H2BK6ac and H2BK33ac. In terms of processing, monoubiquitinated by BRE1 to form H2BK143ub1 and deubiquitinated by UBP26. Required for heterochromatic histone H3 di- and trimethylation at H3K4me. May give a specific tag for epigenetic transcriptional activation.

Its subcellular location is the nucleus. It is found in the chromosome. Functionally, core component of nucleosome. Nucleosomes wrap and compact DNA into chromatin, limiting DNA accessibility to the cellular machineries which require DNA as a template. Histones thereby play a central role in transcription regulation, DNA repair, DNA replication and chromosomal stability. DNA accessibility is regulated via a complex set of post-translational modifications of histones, also called histone code, and nucleosome remodeling. The chain is Histone H2B.4 (H2B.4) from Oryza sativa subsp. indica (Rice).